A 570-amino-acid chain; its full sequence is MSEKHPGPLVVEGKLSDAERMKLESNYLRGTIAEDLNDGLTGGFKGDNFLLIRFHGMYQQDDRDIRAERAEQKLEPRHAMLLRCRLPGGVITTTQWQAIDKFAADNTIYGSIRLTNRQTFQFHGILKKNVKPVHQMLHSVGLDALATANDMNRNVLCTSNPYESQLHAEAYEWAKKISEHLLPRTRAYAEIWLDQEKVAITDEEPILGQTYLPRKFKTTVVIPPQNDIDLHANDMNFVAIAENGKLVGFNLLVGGGLSIEHGNKKTYARTASEFGYLPLEHTLAVAEAVVTTQRDWGNRTDRKNAKTKYTLERVGLETFKAEVERRAGIKFEPIRPYEFTGRGDRIGWVKGIDNNWHLTLFIENGRILDYPGRPLKTGLLEIAKIHQGEFRITANQNLIIASVPESQKAKIETLARDHGLMNAVSAQRENSMACVSFPTCPLAMAEAERFLPSFTDKVEAILEKHGIPDEHIVMRVTGCPNGCGRAMLAEIGLVGKAPGRYNLHLGGNRIGTRIPRMYQENITEPDILASLDELIGRWAKEREAGEGFGDFTVRAGIIRPVLDPARDFWE.

Positions 434, 440, 479, and 483 each coordinate [4Fe-4S] cluster. Cys-483 is a siroheme binding site.

Belongs to the nitrite and sulfite reductase 4Fe-4S domain family. Alpha(8)-beta(8). The alpha component is a flavoprotein, the beta component is a hemoprotein. The cofactor is siroheme. It depends on [4Fe-4S] cluster as a cofactor.

The enzyme catalyses hydrogen sulfide + 3 NADP(+) + 3 H2O = sulfite + 3 NADPH + 4 H(+). It functions in the pathway sulfur metabolism; hydrogen sulfide biosynthesis; hydrogen sulfide from sulfite (NADPH route): step 1/1. Functionally, component of the sulfite reductase complex that catalyzes the 6-electron reduction of sulfite to sulfide. This is one of several activities required for the biosynthesis of L-cysteine from sulfate. The sequence is that of Sulfite reductase [NADPH] hemoprotein beta-component from Salmonella enteritidis PT4 (strain P125109).